Consider the following 306-residue polypeptide: 3-methyl-2-oxobutanoate hydroxymethyltransferase (306 aa).

Mg(2+) contacts are provided by D53 and D96. 3-methyl-2-oxobutanoate-binding positions include 53–54 (DS), D96, and K126. Residue E128 participates in Mg(2+) binding. The Proton acceptor role is filled by E195.

The protein belongs to the PanB family. In terms of assembly, homodecamer; pentamer of dimers. Requires Mg(2+) as cofactor.

The protein resides in the cytoplasm. The enzyme catalyses 3-methyl-2-oxobutanoate + (6R)-5,10-methylene-5,6,7,8-tetrahydrofolate + H2O = 2-dehydropantoate + (6S)-5,6,7,8-tetrahydrofolate. The protein operates within cofactor biosynthesis; (R)-pantothenate biosynthesis; (R)-pantoate from 3-methyl-2-oxobutanoate: step 1/2. Its function is as follows. Catalyzes the reversible reaction in which hydroxymethyl group from 5,10-methylenetetrahydrofolate is transferred onto alpha-ketoisovalerate to form ketopantoate. The sequence is that of 3-methyl-2-oxobutanoate hydroxymethyltransferase from Anaeromyxobacter dehalogenans (strain 2CP-1 / ATCC BAA-258).